The chain runs to 335 residues: MEQPWPPPGPWSFPRTGGETEEESDLDVSPSSSHYSPVPDGGAQMYSHGIELACQRQKEFVKSSVACKWNLAEAQQKLGSLALHNSESLDQEHAKAQTAVSELRQREEEWRQKEEALVQRERTCLWNVDAISKDVFNKSFINQDKRKTEDEDKSQSFMQKYEQKIRHFGMLSRWDDSQRFLSDHPYLVCEETAKYLILWCFHLEAEQKGALMEQIAHQAVVMQFIMEMAKNCNVDPRGCFRLFFQKAKAEEEGYFEAFKNELEAFKARVRLYAQSQSFAPVTVENHAPHSGVGCIGSAEPLPQNPDSLQCCPPAPLCSVDSVVHKEDDDRMMDTV.

Positions 1-11 (MEQPWPPPGPW) are enriched in pro residues. Residues 1 to 42 (MEQPWPPPGPWSFPRTGGETEEESDLDVSPSSSHYSPVPDGG) are disordered. Residues 2–170 (EQPWPPPGPW…YEQKIRHFGM (169 aa)) are self-association. The span at 27–40 (DVSPSSSHYSPVPD) shows a compositional bias: low complexity. Ser32 and Ser88 each carry phosphoserine. A coiled-coil region spans residues 84 to 120 (HNSESLDQEHAKAQTAVSELRQREEEWRQKEEALVQR). The interval 147-276 (KTEDEDKSQS…ARVRLYAQSQ (130 aa)) is self-association and interaction with Hsp90. The interaction with Hsp70 stretch occupies residues 266 to 335 (KARVRLYAQS…EDDDRMMDTV (70 aa)). Positions 277-335 (SFAPVTVENHAPHSGVGCIGSAEPLPQNPDSLQCCPPAPLCSVDSVVHKEDDDRMMDTV) are required for interaction with STIP1.

It belongs to the CDC37 family. As to quaternary structure, self-associates. Forms complexes with Hsp70 and Hsp90. Interacts with CDC37, FKBP4, PPID and STIP1.

It localises to the cytoplasm. Functionally, co-chaperone that binds to numerous proteins and promotes their interaction with Hsp70 and Hsp90. The polypeptide is Hsp90 co-chaperone Cdc37-like 1 (Cdc37l1) (Rattus norvegicus (Rat)).